Consider the following 135-residue polypeptide: Large ribosomal subunit protein uL22 (135 aa).

The segment at 112–135 (KKPEKKKLKAKSAKTEEAPKAAEV) is disordered. The span at 124–135 (AKTEEAPKAAEV) shows a compositional bias: basic and acidic residues.

It belongs to the universal ribosomal protein uL22 family. As to quaternary structure, part of the 50S ribosomal subunit.

In terms of biological role, this protein binds specifically to 23S rRNA; its binding is stimulated by other ribosomal proteins, e.g. L4, L17, and L20. It is important during the early stages of 50S assembly. It makes multiple contacts with different domains of the 23S rRNA in the assembled 50S subunit and ribosome. The globular domain of the protein is located near the polypeptide exit tunnel on the outside of the subunit, while an extended beta-hairpin is found that lines the wall of the exit tunnel in the center of the 70S ribosome. In Brachyspira hyodysenteriae (strain ATCC 49526 / WA1), this protein is Large ribosomal subunit protein uL22.